The primary structure comprises 292 residues: Elongation factor Ts (292 aa).

The interval 79 to 82 (TDFV) is involved in Mg(2+) ion dislocation from EF-Tu.

Belongs to the EF-Ts family.

The protein resides in the cytoplasm. Functionally, associates with the EF-Tu.GDP complex and induces the exchange of GDP to GTP. It remains bound to the aminoacyl-tRNA.EF-Tu.GTP complex up to the GTP hydrolysis stage on the ribosome. This Metamycoplasma arthritidis (strain 158L3-1) (Mycoplasma arthritidis) protein is Elongation factor Ts.